Consider the following 392-residue polypeptide: MPTTALTGIGQLVTNDPALGEGPLGLRRDAAIVFEDGVVAWVGDSAHVPATDTAHDLDGRAVLPGFVESHSHLVFAGDRAEEFAARMSGRPYGAGGIRTTIEATRAATDEQLGANVRRLLDESLRAGSTTVECKSGYGQSVEHELRSVRVAGRYTDEVTLLAAHVPPPEYAGRVDDYVAMACAEMIPRCAPHAKWIDVFCEQGAFDRDQAHAVLTAGIAHGLVPRVHGNQLHRGPGVQLAVEVGAASVDHVTYIDDADIEALAHSDTVATLLPGADFCTRNSYPDARALLDAGVTVALGADCNPGTSYTTSLPFCIALAVRELRMTPDEAVWAATAGGARALRRGDVGVLTPGARADALALDAPSHLHLAYRPGVPLISRVWREGTLAYATN.

Positions 70 and 72 each coordinate Fe(3+). Zn(2+) contacts are provided by H70 and H72. Residues R79, Y137, and H164 each contribute to the 4-imidazolone-5-propanoate site. Y137 is a binding site for N-formimidoyl-L-glutamate. Fe(3+) is bound at residue H227. H227 provides a ligand contact to Zn(2+). Residue Q230 participates in 4-imidazolone-5-propanoate binding. D301 is a binding site for Fe(3+). A Zn(2+)-binding site is contributed by D301. Residues N303 and G305 each coordinate N-formimidoyl-L-glutamate. T306 contacts 4-imidazolone-5-propanoate.

It belongs to the metallo-dependent hydrolases superfamily. HutI family. Zn(2+) serves as cofactor. It depends on Fe(3+) as a cofactor.

Its subcellular location is the cytoplasm. The catalysed reaction is 4-imidazolone-5-propanoate + H2O = N-formimidoyl-L-glutamate. It participates in amino-acid degradation; L-histidine degradation into L-glutamate; N-formimidoyl-L-glutamate from L-histidine: step 3/3. Catalyzes the hydrolytic cleavage of the carbon-nitrogen bond in imidazolone-5-propanoate to yield N-formimidoyl-L-glutamate. It is the third step in the universal histidine degradation pathway. The chain is Imidazolonepropionase from Nocardia farcinica (strain IFM 10152).